A 150-amino-acid chain; its full sequence is Auxin-binding protein 5 (150 aa).

The first 41 residues, 1-41 (MVRRRPATGAAQRPQLAAVGRGLLLASVLAAAASSLPVAES), serve as a signal peptide directing secretion. Zn(2+)-binding residues include histidine 98, histidine 100, and glutamate 104. A glycan (N-linked (GlcNAc...) asparagine) is linked at asparagine 136. Histidine 147 provides a ligand contact to Zn(2+).

Homodimer.

It localises to the endoplasmic reticulum lumen. Functionally, this is probably a receptor for the plant hormone auxin. The polypeptide is Auxin-binding protein 5 (ABP5) (Zea mays (Maize)).